Here is a 122-residue protein sequence, read N- to C-terminus: Large ribosomal subunit protein bL12 (122 aa).

Belongs to the bacterial ribosomal protein bL12 family. Homodimer. Part of the ribosomal stalk of the 50S ribosomal subunit. Forms a multimeric L10(L12)X complex, where L10 forms an elongated spine to which 2 to 4 L12 dimers bind in a sequential fashion. Binds GTP-bound translation factors.

Its function is as follows. Forms part of the ribosomal stalk which helps the ribosome interact with GTP-bound translation factors. Is thus essential for accurate translation. This Levilactobacillus brevis (strain ATCC 367 / BCRC 12310 / CIP 105137 / JCM 1170 / LMG 11437 / NCIMB 947 / NCTC 947) (Lactobacillus brevis) protein is Large ribosomal subunit protein bL12.